Consider the following 243-residue polypeptide: 1-(5-phosphoribosyl)-5-[(5-phosphoribosylamino)methylideneamino] imidazole-4-carboxamide isomerase (243 aa).

The active-site Proton acceptor is Asp-9. Residue Asp-131 is the Proton donor of the active site.

This sequence belongs to the HisA/HisF family.

It is found in the cytoplasm. The enzyme catalyses 1-(5-phospho-beta-D-ribosyl)-5-[(5-phospho-beta-D-ribosylamino)methylideneamino]imidazole-4-carboxamide = 5-[(5-phospho-1-deoxy-D-ribulos-1-ylimino)methylamino]-1-(5-phospho-beta-D-ribosyl)imidazole-4-carboxamide. The protein operates within amino-acid biosynthesis; L-histidine biosynthesis; L-histidine from 5-phospho-alpha-D-ribose 1-diphosphate: step 4/9. The chain is 1-(5-phosphoribosyl)-5-[(5-phosphoribosylamino)methylideneamino] imidazole-4-carboxamide isomerase from Campylobacter jejuni (strain RM1221).